A 305-amino-acid chain; its full sequence is Glycine--tRNA ligase alpha subunit (305 aa).

The protein belongs to the class-II aminoacyl-tRNA synthetase family. As to quaternary structure, tetramer of two alpha and two beta subunits.

It is found in the cytoplasm. The enzyme catalyses tRNA(Gly) + glycine + ATP = glycyl-tRNA(Gly) + AMP + diphosphate. The protein is Glycine--tRNA ligase alpha subunit of Vibrio campbellii (strain ATCC BAA-1116).